The sequence spans 266 residues: Short-chain dehydrogenase/reductase atnB (266 aa).

NADP(+) is bound by residues I13, D57, and N85. Catalysis depends on proton donor residues S147 and Y166. The NADP(+) site is built by Y166, K170, V199, and T201. K170 functions as the Lowers pKa of active site Tyr in the catalytic mechanism.

This sequence belongs to the short-chain dehydrogenases/reductases (SDR) family.

It functions in the pathway secondary metabolite biosynthesis; terpenoid biosynthesis. In terms of biological role, short-chain dehydrogenase/reductase; part of the gene cluster that mediates the biosynthesis of the meroterpenoids arthripenoids. The pathway begins with the HR-PKS atnH that catalyzes two chain-extension steps to form a reduced triketide, which then primes the SAT domain in the NR-PKS atnG to initiate three more cycles of extension to give a linear hexaketide corresponding to the polyketide part of arthripenoids. The FAD-dependent monooxygenase atnJ then performs an oxidative decarboxylation at C11 of the atnH/atnG product, via an electrophilic aromatic hydroxylation with concomitant ipso-decarboxylation. The membrane-bound polyprenyl transferase atnF then introduces a farnesyl group before the FAD-dependent monooxygenase atnK functions as the first epoxidase on terminal C12'-C13' olefin, followed by a second epoxidation on C7'-C8' catalyzed by atnA. The terpene cyclase/mutase atnI then initiates the sequential tricyclic ring formation through protonation of the terminal epoxide and catalyzes the regioselective and stereoselective 6/6/6-tricyclic ring formation. The cytochrome P450 monooxygenase atnM is responsible for hydroxylating both C1' and C10'. The next steps may involve ketoreduction and acetyl transfer by the ketoreductase atnB and the acetyltransferase atnC, and lead to the production of arthripenoid B, the final biosynthetic product of the atn cluster. The hydroquinone moiety in arthripenoid B is prone to undergo spontaneous oxidation to afford a benzoquinone compound, a key intermediate for generating structure diversity. For instance, addition of a cysteine followed by ring contraction gives arthripenoid A, tautomerization gives the main product arthripenoid C, addition of a molecular of water or amine affords arthripenoid D or E, respectively, and loss of one water forms arthripenoid F. This Arthrinium sp protein is Short-chain dehydrogenase/reductase atnB.